The following is a 314-amino-acid chain: MIEIEKPKIETVEISENATFGKFVVEPLERGYGATLGNSLRRILLSSLPGAAVTTVQIDGALHEFSTVDGVVEDVTTIILNLKKLALKIYSEEPKTLEIDVQGEGAVTAADLTYDSDVEVMNPDLHIATLNSKGNLHMKLIAERGRGYRPAEENKNDDQPIGVIPIDSIFTPVSRVTYQVENTRVGQVANYDKLTMDVSTDGSIRPEEAVSLGAKIITEHLNIFVGLTDEAQNAEIMVEKEEDQKEKVMEMTIEELDLSVRSYNCLKRAGINTVQELANKSEEDMMKVRNLGRKSLEEVKVKLEDLGLGLRDDD.

The tract at residues 1-228 (MIEIEKPKIE…EHLNIFVGLT (228 aa)) is alpha N-terminal domain (alpha-NTD). The interval 245–314 (KEKVMEMTIE…DLGLGLRDDD (70 aa)) is alpha C-terminal domain (alpha-CTD).

This sequence belongs to the RNA polymerase alpha chain family. Homodimer. The RNAP catalytic core consists of 2 alpha, 1 beta, 1 beta' and 1 omega subunit. When a sigma factor is associated with the core the holoenzyme is formed, which can initiate transcription.

It carries out the reaction RNA(n) + a ribonucleoside 5'-triphosphate = RNA(n+1) + diphosphate. Its function is as follows. DNA-dependent RNA polymerase catalyzes the transcription of DNA into RNA using the four ribonucleoside triphosphates as substrates. The chain is DNA-directed RNA polymerase subunit alpha from Oceanobacillus iheyensis (strain DSM 14371 / CIP 107618 / JCM 11309 / KCTC 3954 / HTE831).